We begin with the raw amino-acid sequence, 1132 residues long: APC membrane recruitment protein 1 (1132 aa).

Methionine 1 carries the post-translational modification N-acetylmethionine. The segment covering 1–21 has biased composition (polar residues); the sequence is MESQQDEAVQTKGASTSSDAQ. 8 disordered regions span residues 1–256, 268–301, 338–423, 469–505, 674–699, 736–770, 924–949, and 1038–1132; these read MESQ…ACKN, FMQPKPVLEGGSLEEPHTSETEGKVVAGEVNPPN, SMTD…GEEN, GLGELLTPQSDQQESAPNSDEGYYDSTTPGFEDDSGE, TSGGSQTSHRGTTSAFPATSSSEPDW, MQEANFGGSPRKAYPSYSPPEEPEEEEEEKEGNAT, ELQAHQEDSDEEGEEEEGEWGRDSPL, and SQAS…NLAK. The segment covering 24–35 has biased composition (basic and acidic residues); sequence GAEKGAKNKTTE. Positions 121-133 are enriched in low complexity; the sequence is SKSSAQFPSSQSA. Basic and acidic residues-rich tracts occupy residues 195–208, 218–229, and 281–290; these read KELEGARTRSHEHV, EIFRDTRKENAK, and EEPHTSETEG. Acidic residues predominate over residues 372-423; sequence ALPDDDDNDDEEEEEEEEEEEEEEEEEEEEEEEEEEEELLEDEEEVKDGEEN. 2 stretches are compositionally biased toward polar residues: residues 475 to 486 and 677 to 696; these read TPQSDQQESAPN and GSQTSHRGTTSAFPATSSSE. 2 stretches are compositionally biased toward acidic residues: residues 756–765 and 931–941; these read EEPEEEEEEK and DSDEEGEEEEG. 2 stretches are compositionally biased toward polar residues: residues 1059 to 1072 and 1115 to 1132; these read SCSSISGANSQSQA and ASLSTSYSSTAMNGNLAK.

This sequence belongs to the Amer family. In terms of assembly, interacts with CTNNB1, AXIN1, LRP6, KEAP1, APC and BTRC. Interacts with SCF (SKP1-CUL1-F-box protein) E3 ubiquitin-protein ligase complexes containing BTRC and/or FBXW11. Identified in the beta-catenin destruction complex containing CTNNB1, APC, AXIN1 and AXIN2. Interacts with WT1. As to expression, expressed in kidney.

The protein resides in the cytoplasm. It is found in the cell membrane. Its subcellular location is the nucleus. Its function is as follows. Regulator of the canonical Wnt signaling pathway. Acts by specifically binding phosphatidylinositol 4,5-bisphosphate (PtdIns(4,5)P2), translocating to the cell membrane and interacting with key regulators of the canonical Wnt signaling pathway, such as components of the beta-catenin destruction complex. Acts both as a positive and negative regulator of the Wnt signaling pathway, depending on the context: acts as a positive regulator by promoting LRP6 phosphorylation. Also acts as a negative regulator by acting as a scaffold protein for the beta-catenin destruction complex and promoting stabilization of Axin at the cell membrane. Promotes CTNNB1 ubiquitination and degradation. Involved in kidney development. This is APC membrane recruitment protein 1 (Amer1) from Mus musculus (Mouse).